A 73-amino-acid polypeptide reads, in one-letter code: Small, acid-soluble spore protein C2 (73 aa).

This sequence belongs to the alpha/beta-type SASP family.

In terms of biological role, SASP are bound to spore DNA. They are double-stranded DNA-binding proteins that cause DNA to change to an a-like conformation. They protect the DNA backbone from chemical and enzymatic cleavage and are thus involved in dormant spore's high resistance to UV light. The sequence is that of Small, acid-soluble spore protein C2 (SASP-C2) from Priestia megaterium (Bacillus megaterium).